The sequence spans 348 residues: Short-chain dehydrogenase fogG (348 aa).

Residues Leu51, Arg75, Asp100, and Asn126 each coordinate NADP(+). Residues Ser180 and Tyr215 each act as proton donor in the active site. Positions 215 and 219 each coordinate NADP(+). Lys219 serves as the catalytic Lowers pKa of active site Tyr.

This sequence belongs to the short-chain dehydrogenases/reductases (SDR) family.

The protein operates within secondary metabolite biosynthesis. Its function is as follows. Short-chain dehydrogenase; part of the gene cluster that mediates the biosynthesis of flavoglaucin and congeners (including aspergin, dihydroauroglaucin and auroglaucin), prenylated salicylaldehyde derivatives carrying a saturated or an unsaturated C-7 side chain. The PKS fogA releases the carboxylic acid (8E,10E,12E)-3,5,7-trihydroxytetradeca-8,10,12-trienoic acid as its product, as well as derivatives with one and two double bonds. FogA is indeed able to reduce the initial triketide, thus being at least partially responsible for the differently saturated heptyl side chains of flavoglaucin congeners. The oxidoreductases fogB, fogC and fogD modify the nascent polyketide in fogA-bound form and, together, fogA, fogB, fogC and fogD are necessary for the formation of the aromatic core and the cyclized PKS products are released as salicyl alcohols. In particular, fogB is responsible for oxidation of a hydroxyl group or reduction of remaining double bond(s) at the C-7 residue whereas fogD is probably involved in the reductive release of the modified PKS products. The cytochrome P450 monooxygenase fogE is then responsible for the hydroxylation at C-3 of the benzene ring. The fogE products are substrates of the prenyltransferase fogH and the prenylated benzyl alcohols are subsequently oxidized by the fogF to produce the final aryl aldehydes flavoglaucin and congeners. The short-chain dehydrogenase fogG does not seem to be involved in the biosynthesis of the prenylated salicylaldehyde derivatives. This chain is Short-chain dehydrogenase fogG, found in Aspergillus ruber (strain CBS 135680).